We begin with the raw amino-acid sequence, 501 residues long: Glycerol kinase (501 aa).

T12 is a binding site for ADP. The ATP site is built by T12, T13, and S14. A sn-glycerol 3-phosphate-binding site is contributed by T12. ADP is bound at residue R16. The sn-glycerol 3-phosphate site is built by R82, E83, Y134, and D244. Glycerol contacts are provided by R82, E83, Y134, D244, and Q245. 2 residues coordinate ADP: T266 and G310. Residues T266, G310, Q314, and G411 each coordinate ATP. 2 residues coordinate ADP: G411 and N415.

Belongs to the FGGY kinase family.

The catalysed reaction is glycerol + ATP = sn-glycerol 3-phosphate + ADP + H(+). The protein operates within polyol metabolism; glycerol degradation via glycerol kinase pathway; sn-glycerol 3-phosphate from glycerol: step 1/1. Inhibited by fructose 1,6-bisphosphate (FBP). Functionally, key enzyme in the regulation of glycerol uptake and metabolism. Catalyzes the phosphorylation of glycerol to yield sn-glycerol 3-phosphate. In Methylorubrum populi (strain ATCC BAA-705 / NCIMB 13946 / BJ001) (Methylobacterium populi), this protein is Glycerol kinase.